The chain runs to 229 residues: Extracellular endonuclease (229 aa).

The signal sequence occupies residues 1-19 (MSARFIAVFCLFFTVTAHA). The interval 69–95 (RADASNGNTSSRPGRSGISASAGKPVG) is disordered. Residues 71-81 (DASNGNTSSRP) are compositionally biased toward polar residues.

It belongs to the EndA/NucM nuclease family.

It localises to the secreted. This chain is Extracellular endonuclease (endX), found in Pseudomonas fluorescens biotype A.